The sequence spans 130 residues: Holo-[acyl-carrier-protein] synthase (130 aa).

Mg(2+) is bound by residues aspartate 9 and glutamate 58.

This sequence belongs to the P-Pant transferase superfamily. AcpS family. Mg(2+) is required as a cofactor.

Its subcellular location is the cytoplasm. The catalysed reaction is apo-[ACP] + CoA = holo-[ACP] + adenosine 3',5'-bisphosphate + H(+). Its function is as follows. Transfers the 4'-phosphopantetheine moiety from coenzyme A to a Ser of acyl-carrier-protein. The chain is Holo-[acyl-carrier-protein] synthase from Mycobacterium marinum (strain ATCC BAA-535 / M).